The chain runs to 168 residues: Large ribosomal subunit protein uL29c (168 aa).

A disordered region spans residues Met-1–Pro-20. Residues Met-1 to Met-58 constitute a chloroplast transit peptide.

Component of the chloroplast large ribosomal subunit (LSU). Mature 70S chloroplast ribosomes of higher plants consist of a small (30S) and a large (50S) subunit. The 30S small subunit contains 1 molecule of ribosomal RNA (16S rRNA) and 24 different proteins. The 50S large subunit contains 3 rRNA molecules (23S, 5S and 4.5S rRNA) and 33 different proteins.

The protein localises to the plastid. It is found in the chloroplast. Functionally, component of the chloroplast ribosome (chloro-ribosome), a dedicated translation machinery responsible for the synthesis of chloroplast genome-encoded proteins, including proteins of the transcription and translation machinery and components of the photosynthetic apparatus. The protein is Large ribosomal subunit protein uL29c (RPL29) of Spinacia oleracea (Spinach).